Reading from the N-terminus, the 364-residue chain is MMSKTYHIAVLPGDGIGPEVMAQAYKILDAVRQRFNVRISTSEYDVGGAAIDRQGSPLPAGTVAGCEQADAILFGSVGGPKWEHLPAAEQPERGALLPLRKHFKLFSNLRPSRLYPGLEAYCPLRANIAERGFDILCVRELTGGIYFGQPKGREGTGPHEHAFDTEVYYRFEIERIARIAFESARKRRGKVTSIDKANVLQSSILWRKVVSQVAPDYPDVALSHLYIDNATMQLIKDPSQFDVMLCSNLFGDILSDECAMITGSMGMLPSASLNEQGFGMYEPAGGSAPDIAGKDIANPVAQILSASLLLRYSLGLDDAADAIELAVNQALEAGHRTADLAGGGSAVGTGEMGDIIAALISQGA.

79–92 (GPKWEHLPAAEQPE) is an NAD(+) binding site. Substrate is bound by residues arginine 100, arginine 110, arginine 139, and aspartate 228. Mg(2+) is bound by residues aspartate 228, aspartate 252, and aspartate 256. 286–298 (GSAPDIAGKDIAN) serves as a coordination point for NAD(+).

Belongs to the isocitrate and isopropylmalate dehydrogenases family. LeuB type 1 subfamily. As to quaternary structure, homodimer. Mg(2+) is required as a cofactor. It depends on Mn(2+) as a cofactor.

The protein localises to the cytoplasm. The enzyme catalyses (2R,3S)-3-isopropylmalate + NAD(+) = 4-methyl-2-oxopentanoate + CO2 + NADH. The protein operates within amino-acid biosynthesis; L-leucine biosynthesis; L-leucine from 3-methyl-2-oxobutanoate: step 3/4. Catalyzes the oxidation of 3-carboxy-2-hydroxy-4-methylpentanoate (3-isopropylmalate) to 3-carboxy-4-methyl-2-oxopentanoate. The product decarboxylates to 4-methyl-2 oxopentanoate. In Sodalis glossinidius (strain morsitans), this protein is 3-isopropylmalate dehydrogenase.